A 314-amino-acid polypeptide reads, in one-letter code: Ketimine reductase mu-crystallin (314 aa).

R47 is a binding site for 3,3',5-triiodo-L-thyronine. NADPH contacts are provided by S91, H92, R119, A144, V146, Q147, N168, R169, T170, N173, T205, M206, and V226. A 3,3',5-triiodo-L-thyronine-binding site is contributed by E257. S292 contacts NADPH.

The protein belongs to the ornithine cyclodeaminase/mu-crystallin family. As to quaternary structure, homodimer. Binds the thyroid hormone triiodothyronine (T3); T3 binding inhibits enzymatic activity. As to expression, expressed at high abundance in lens, but outside the lens it is preferentially expressed in neural tissues, retina and brain.

It is found in the cytoplasm. It catalyses the reaction L-pipecolate + NADP(+) = Delta(1)-piperideine-2-carboxylate + NADPH + H(+). It carries out the reaction L-pipecolate + NAD(+) = Delta(1)-piperideine-2-carboxylate + NADH + H(+). The catalysed reaction is L-proline + NADP(+) = 1-pyrroline-2-carboxylate + NADPH + H(+). The enzyme catalyses L-proline + NAD(+) = 1-pyrroline-2-carboxylate + NADH + H(+). It catalyses the reaction (3R)-1,4-thiomorpholine-3-carboxylate + NAD(+) = 3,4-dehydrothiomorpholine-3-carboxylate + NADH + 2 H(+). It carries out the reaction (3R)-1,4-thiomorpholine-3-carboxylate + NADP(+) = 3,4-dehydrothiomorpholine-3-carboxylate + NADPH + 2 H(+). The catalysed reaction is (S)-cystathionine ketimine + NADH + 2 H(+) = (3R,5S)-2,3,5,6,7-pentahydro-1,4-thiazepine-3,5-dicarboxylate + NAD(+). The enzyme catalyses (S)-cystathionine ketimine + NADPH + 2 H(+) = (3R,5S)-2,3,5,6,7-pentahydro-1,4-thiazepine-3,5-dicarboxylate + NADP(+). It catalyses the reaction (R)-lanthionine ketimine + NADPH + 2 H(+) = (3R,5R)-1,4-thiomorpholine-3,5-dicarboxylate + NADP(+). It carries out the reaction Delta(2)-thiazoline-2-carboxylate + NADPH + 2 H(+) = L-thiazolidine-2-carboxylate + NADP(+). In terms of biological role, catalyzes the NAD(P)H-dependent reduction of imine double bonds of a number of cyclic ketimine substrates, including sulfur-containing cyclic ketimines. Under physiological conditions, it efficiently catalyzes delta(1)-piperideine-2-carboxylate (P2C) and delta(1)-pyrroline-2-carboxylate (Pyr2C) reduction, suggesting a central role in lysine and glutamate metabolism. Additional substrates are delta(2)-thiazoline-2-carboxylate (T2C), 3,4-dehydrothiomorpholine-3-carboxylate (AECK), and (R)-lanthionine ketimine (LK) that is reduced at very low rate compared to other substrates. Also catalyzes the NAD(P)H-dependent reduction of (S)-cystathionine ketimine (CysK). The chain is Ketimine reductase mu-crystallin (CRYM) from Macropus fuliginosus (Western gray kangaroo).